The chain runs to 451 residues: Tubulin alpha-1 chain (451 aa).

GTP is bound at residue Q11. The residue at position 40 (K40) is an N6-acetyllysine. Residues E71, G144, T145, T179, N206, and N228 each coordinate GTP. Position 71 (E71) interacts with Mg(2+). Residue E254 is part of the active site.

It belongs to the tubulin family. In terms of assembly, dimer of alpha and beta chains. A typical microtubule is a hollow water-filled tube with an outer diameter of 25 nm and an inner diameter of 15 nM. Alpha-beta heterodimers associate head-to-tail to form protofilaments running lengthwise along the microtubule wall with the beta-tubulin subunit facing the microtubule plus end conferring a structural polarity. Microtubules usually have 13 protofilaments but different protofilament numbers can be found in some organisms and specialized cells. The cofactor is Mg(2+). Undergoes a tyrosination/detyrosination cycle, the cyclic removal and re-addition of a C-terminal tyrosine residue by the enzymes tubulin tyrosine carboxypeptidase (TTCP) and tubulin tyrosine ligase (TTL), respectively. Post-translationally, acetylation of alpha chains at Lys-40 stabilizes microtubules and affects affinity and processivity of microtubule motors. This modification has a role in multiple cellular functions, ranging from cell motility, cell cycle progression or cell differentiation to intracellular trafficking and signaling.

The protein localises to the cytoplasm. It is found in the cytoskeleton. It catalyses the reaction GTP + H2O = GDP + phosphate + H(+). Functionally, tubulin is the major constituent of microtubules, a cylinder consisting of laterally associated linear protofilaments composed of alpha- and beta-tubulin heterodimers. Microtubules grow by the addition of GTP-tubulin dimers to the microtubule end, where a stabilizing cap forms. Below the cap, tubulin dimers are in GDP-bound state, owing to GTPase activity of alpha-tubulin. The protein is Tubulin alpha-1 chain (TUBA1) of Chlamydomonas reinhardtii (Chlamydomonas smithii).